Reading from the N-terminus, the 147-residue chain is Hemoglobin subunit beta (147 aa).

Valine 2 is modified (N-acetylvaline). Residues histidine 3 to histidine 147 form the Globin domain. Threonine 13 bears the Phosphothreonine mark. The residue at position 45 (serine 45) is a Phosphoserine. Lysine 60 carries the N6-acetyllysine modification. Histidine 64 lines the heme b pocket. Lysine 83 carries the post-translational modification N6-acetyllysine. Histidine 93 serves as a coordination point for heme b. An S-nitrosocysteine modification is found at cysteine 94. Residue lysine 145 is modified to N6-acetyllysine.

Belongs to the globin family. As to quaternary structure, heterotetramer of two alpha chains and two beta chains. Red blood cells.

Its function is as follows. Involved in oxygen transport from the lung to the various peripheral tissues. The chain is Hemoglobin subunit beta (HBB) from Rhinolophus ferrumequinum (Greater horseshoe bat).